Reading from the N-terminus, the 44-residue chain is Photosystem I reaction center subunit IX (44 aa).

A helical transmembrane segment spans residues 7 to 27; that stretch reads YLSVAPVLSTLWFGALAGLLI.

This sequence belongs to the PsaJ family.

The protein localises to the plastid. Its subcellular location is the chloroplast thylakoid membrane. May help in the organization of the PsaE and PsaF subunits. The chain is Photosystem I reaction center subunit IX from Solanum bulbocastanum (Wild potato).